We begin with the raw amino-acid sequence, 561 residues long: FAD-binding monooxygenase tazF (561 aa).

Residues 74-77, 86-87, and Y92 each bind FAD; these read TWLD and DI. 84-86 lines the NADP(+) pocket; that stretch reads GCD. Residues 212–218 and 235–236 contribute to the NADP(+) site; these read NGSSALQ and RH.

It belongs to the FAD-binding monooxygenase family. It depends on FAD as a cofactor.

Its pathway is secondary metabolite biosynthesis. In terms of biological role, FAD-binding monooxygenase; part of the gene cluster that mediates the biosynthesis of azaterrilone A and other azaphilones, a class of fungal metabolites characterized by a highly oxygenated pyrano-quinone bicyclic core and exhibiting a broad range of bioactivities. The first step of the pathway begins with the non-reducing polyketide synthase tazA that assembles one acetyl-CoA starter unit, five malonyl-CoA units, and catalyzes a series of Claisen condensations, methylation, PT-mediated cyclization, and finally releases the first hexaketide precursor through the R-domain. The tazA product then undergoes reduction on its terminal ketone and the following pyran-ring formation by yet undetermined enzyme(s). Dehydration and enoyl reduction, possibly involving the trans-enoyl reductase tazE leads to the next intermediate. TazD is predicted as an acetyltransferase and might catalyze the acetylation steps leading to the synthesis of azaterrilone A. Azaterrilone A is not the final product of the taz pathway and both the highly reducing polyketide synthase tazB and the dual enzyme tazHJ catalyze late steps of the pathway, leading to the production of the 2 final stereoisomers that contain additional polyketide modification whose structures have still to be determined. The protein is FAD-binding monooxygenase tazF of Aspergillus terreus (strain NIH 2624 / FGSC A1156).